Reading from the N-terminus, the 414-residue chain is BICD family-like cargo adapter 2 (414 aa).

A coiled-coil region spans residues Gly34–Thr341. The segment covering Gln372–Gly384 has biased composition (basic and acidic residues). The interval Gln372–Gly399 is disordered.

In Danio rerio (Zebrafish), this protein is BICD family-like cargo adapter 2 (bicdl2).